The chain runs to 161 residues: Regulator of ribonuclease activity A (161 aa).

It belongs to the RraA family. In terms of assembly, homotrimer. Binds to both RNA-binding sites in the C-terminal region of Rne and to RhlB.

It is found in the cytoplasm. Its function is as follows. Globally modulates RNA abundance by binding to RNase E (Rne) and regulating its endonucleolytic activity. Can modulate Rne action in a substrate-dependent manner by altering the composition of the degradosome. Modulates RNA-binding and helicase activities of the degradosome. The protein is Regulator of ribonuclease activity A of Enterobacter sp. (strain 638).